The primary structure comprises 96 residues: Integration host factor subunit beta (96 aa).

The disordered stretch occupies residues 59-86 (RVGRNPKTGETVELDGKHVPHFKPGKEL). Over residues 72–86 (LDGKHVPHFKPGKEL) the composition is skewed to basic and acidic residues.

The protein belongs to the bacterial histone-like protein family. In terms of assembly, heterodimer of an alpha and a beta chain.

Its function is as follows. This protein is one of the two subunits of integration host factor, a specific DNA-binding protein that functions in genetic recombination as well as in transcriptional and translational control. The polypeptide is Integration host factor subunit beta (Pseudoalteromonas atlantica (strain T6c / ATCC BAA-1087)).